The primary structure comprises 357 residues: Alanine racemase (357 aa).

K35 acts as the Proton acceptor; specific for D-alanine in catalysis. K35 is subject to N6-(pyridoxal phosphate)lysine. A substrate-binding site is contributed by R131. Y256 serves as the catalytic Proton acceptor; specific for L-alanine. Substrate is bound at residue M304.

The protein belongs to the alanine racemase family. Pyridoxal 5'-phosphate serves as cofactor.

The enzyme catalyses L-alanine = D-alanine. It functions in the pathway amino-acid biosynthesis; D-alanine biosynthesis; D-alanine from L-alanine: step 1/1. Catalyzes the interconversion of L-alanine and D-alanine. May also act on other amino acids. The sequence is that of Alanine racemase (alr) from Legionella pneumophila (strain Lens).